The following is a 305-amino-acid chain: MEKLFIAAGLFVGLVCLVKCMRFSQHLFLRFCKALPSSFLRSMGQWAVITGAGDGIGKAYSFELARHGLNVVLISRTLEKLQTIAEEIERTTGSCVKIVQADFTREDIYDHIKEHLEGLEIGILVNNVGMLPSFFPSHFLSTSGESQNLIHCNITSVVKMTQLVLKHMESRRKGLILNISSGAALRPWPLYSLYSASKAFVYTFSKALSVEYRDKGIIIQVLTPYSISTPMTKYLNNKMTKTADEFVKESLKYVTIGAESCGCLAHEIIAIILNRIPSRIFYSSTAQRFLLTRYSDYLKRNISNR.

44–73 (GQWAVITGAGDGIGKAYSFELARHGLNVVL) is an NADP(+) binding site. Ser181 serves as a coordination point for substrate. The Proton acceptor role is filled by Tyr194.

This sequence belongs to the short-chain dehydrogenases/reductases (SDR) family. 17-beta-HSD 3 subfamily. As to expression, expressed in the testes.

Its subcellular location is the endoplasmic reticulum. It carries out the reaction a 17beta-hydroxy steroid + NADP(+) = a 17-oxo steroid + NADPH + H(+). The enzyme catalyses testosterone + NADP(+) = androst-4-ene-3,17-dione + NADPH + H(+). It catalyses the reaction 17beta-estradiol + NADP(+) = estrone + NADPH + H(+). The catalysed reaction is 3beta-hydroxyandrost-5-en-17-one + NADPH + H(+) = androst-5-en-3beta,17beta-diol + NADP(+). It carries out the reaction 17beta-hydroxy-5alpha-androstan-3-one + NADP(+) = 5alpha-androstan-3,17-dione + NADPH + H(+). The enzyme catalyses androsterone + NADPH + H(+) = 5alpha-androstane-3alpha,17beta-diol + NADP(+). It catalyses the reaction 3beta-hydroxy-5alpha-androstan-17-one + NADPH + H(+) = 5alpha-androstane-3beta,17beta-diol + NADP(+). The catalysed reaction is androst-4-ene-3,11,17-trione + NADPH + H(+) = 17beta-hydroxyandrost-4-ene-3,11-dione + NADP(+). It carries out the reaction 11beta-hydroxyandrost-4-ene-3,17-dione + NADPH + H(+) = 11beta,17beta-dihydroxyandrost-4-ene-3-one + NADP(+). It participates in hormone biosynthesis; testosterone biosynthesis. Its pathway is steroid metabolism. In terms of biological role, catalyzes the conversion of 17-oxosteroids to 17beta-hydroxysteroids. Favors the reduction of androstenedione to testosterone. Testosterone is the key androgen driving male development and function. Uses NADPH while the two other EDH17B enzymes use NADH. Androgens such as epiandrosterone, dehydroepiandrosterone, androsterone and androstanedione are accepted as substrates and reduced at C-17. Can reduce 11-ketoandrostenedione as well as 11beta-hydroxyandrostenedione at C-17 to the respective testosterone forms. Plays a role in the rate-limiting-step for the maximum level of testosterone production by the testis but does not affect basal testosterone production. The polypeptide is 17-beta-hydroxysteroid dehydrogenase type 3 (Mus musculus (Mouse)).